Consider the following 246-residue polypeptide: Peptide methionine sulfoxide reductase (246 aa).

The active-site Cysteine sulfenic acid (-SOH) intermediate is the C48. C48 and C246 are oxidised to a cystine.

In terms of processing, conjugated to URM1, a ubiquitin-like protein.

The enzyme catalyses L-methionyl-[protein] + [thioredoxin]-disulfide + H2O = L-methionyl-(S)-S-oxide-[protein] + [thioredoxin]-dithiol. It catalyses the reaction [thioredoxin]-disulfide + L-methionine + H2O = L-methionine (S)-S-oxide + [thioredoxin]-dithiol. Its function is as follows. Has an important function as a repair enzyme for proteins that have been inactivated by oxidation. Catalyzes the reduction of methionine sulfoxide in proteins to methionine. Does not catalyze the reverse reaction involving the oxidation of methionine residues. In Drosophila melanogaster (Fruit fly), this protein is Peptide methionine sulfoxide reductase.